Here is a 90-residue protein sequence, read N- to C-terminus: Photosystem I reaction center subunit PsaK 2 (90 aa).

2 consecutive transmembrane segments (helical) span residues 20 to 42 and 67 to 89; these read LSVG…FAIQ and LATM…SSGI.

This sequence belongs to the PsaG/PsaK family.

The protein resides in the cellular thylakoid membrane. This is Photosystem I reaction center subunit PsaK 2 (psaK2) from Synechocystis sp. (strain ATCC 27184 / PCC 6803 / Kazusa).